A 101-amino-acid chain; its full sequence is Thiosulfate sulfurtransferase GlpE (101 aa).

Positions 17 to 101 (EAKSVQIVDI…GFSAWHEANA (85 aa)) constitute a Rhodanese domain. Cys-65 acts as the Cysteine persulfide intermediate in catalysis.

The protein belongs to the GlpE family.

The protein resides in the cytoplasm. The enzyme catalyses thiosulfate + hydrogen cyanide = thiocyanate + sulfite + 2 H(+). It catalyses the reaction thiosulfate + [thioredoxin]-dithiol = [thioredoxin]-disulfide + hydrogen sulfide + sulfite + 2 H(+). Transferase that catalyzes the transfer of sulfur from thiosulfate to thiophilic acceptors such as cyanide or dithiols. May function in a CysM-independent thiosulfate assimilation pathway by catalyzing the conversion of thiosulfate to sulfite, which can then be used for L-cysteine biosynthesis. This Shewanella oneidensis (strain ATCC 700550 / JCM 31522 / CIP 106686 / LMG 19005 / NCIMB 14063 / MR-1) protein is Thiosulfate sulfurtransferase GlpE.